The sequence spans 165 residues: HTH-type transcriptional regulator MmpR5 (165 aa).

The HTH marR-type domain occupies 1–151; the sequence is MSVNDGVDQM…LLAYMENVVS (151 aa). A DNA-binding region (H-T-H motif) is located at residues 53–76; sequence SEELATALAASSGGISTNARMLIQ.

Homodimer.

Its function is as follows. Controls the expression level of the Mmps2-MmpL2, MmpS4-MmpL4, and MmpS5-MmpL5 transport systems. Also controls its own expression. Acts by binding directly to the promoter regions. The protein is HTH-type transcriptional regulator MmpR5 of Mycobacterium tuberculosis (strain ATCC 25618 / H37Rv).